Here is a 545-residue protein sequence, read N- to C-terminus: MTKFIFVTGGVVSSIGKGIVAASLGRLLKSRDYSVSILKLDPYINIDPGTMSPFQHGEVFVTQDGAETDLDLGHYERFTDTSMSRLNSVTTGSIYQAVIMRERRGDYNGGTVQVIPHITNEIKERILSVAKETNPSVVITEIGGTVGDIESLPFLEAIRQLRKQVGRQNVLYMHVTLMPYIASAGEMKTKPTQHSVKELRSIGIQPDILVCRSDRPIPRGLKQKLSEFCDVPVECVITSQDARSIYEVPLILEGEGLAEQTLKLLQMEQRQPNLEKWQAMVQGLYSPKHTVEIAIVGKYVSLGDAYLSVVEALRHAAIATQGDLQLRWINSEDLETQAPETYLAGVDGIVVPGGFGTRGVDGKIAAIKYARDRQIPFLGLCLGMQCSVIEWARNVGGLAGANSAEFDSTTKYPVINLLPEQQDVVDLGGTMRLGVYPCHILPNTLASKLYQAEIIQERHRHRYEFNNDYRQLLLDSGYVISGTSPDGRLVEIVEYPQHPFFISCQFHPEFQSRPNTPHPLFTGFVQAAIAQSHPTANFQTPVKVS.

Positions 1 to 267 (MTKFIFVTGG…AEQTLKLLQM (267 aa)) are amidoligase domain. Serine 13 is a CTP binding site. Serine 13 contacts UTP. ATP-binding positions include 14–19 (SIGKGI) and aspartate 71. Residues aspartate 71 and glutamate 141 each coordinate Mg(2+). CTP-binding positions include 148–150 (DIE), 188–193 (KTKPTQ), and lysine 224. UTP is bound by residues 188 to 193 (KTKPTQ) and lysine 224. Residues 292–534 (EIAIVGKYVS…VQAAIAQSHP (243 aa)) form the Glutamine amidotransferase type-1 domain. Position 354 (glycine 354) interacts with L-glutamine. The active-site Nucleophile; for glutamine hydrolysis is the cysteine 381. L-glutamine-binding positions include 382–385 (LGMQ), glutamate 405, and arginine 462. Residues histidine 507 and glutamate 509 contribute to the active site.

Belongs to the CTP synthase family. Homotetramer.

The catalysed reaction is UTP + L-glutamine + ATP + H2O = CTP + L-glutamate + ADP + phosphate + 2 H(+). It carries out the reaction L-glutamine + H2O = L-glutamate + NH4(+). It catalyses the reaction UTP + NH4(+) + ATP = CTP + ADP + phosphate + 2 H(+). It functions in the pathway pyrimidine metabolism; CTP biosynthesis via de novo pathway; CTP from UDP: step 2/2. With respect to regulation, allosterically activated by GTP, when glutamine is the substrate; GTP has no effect on the reaction when ammonia is the substrate. The allosteric effector GTP functions by stabilizing the protein conformation that binds the tetrahedral intermediate(s) formed during glutamine hydrolysis. Inhibited by the product CTP, via allosteric rather than competitive inhibition. Functionally, catalyzes the ATP-dependent amination of UTP to CTP with either L-glutamine or ammonia as the source of nitrogen. Regulates intracellular CTP levels through interactions with the four ribonucleotide triphosphates. The polypeptide is CTP synthase (Trichormus variabilis (strain ATCC 29413 / PCC 7937) (Anabaena variabilis)).